Consider the following 738-residue polypeptide: Cleavage and polyadenylation specificity factor subunit 2 (738 aa).

This sequence belongs to the metallo-beta-lactamase superfamily. RNA-metabolizing metallo-beta-lactamase-like family. CPSF2/YSH1 subfamily. In terms of assembly, CPSF is a heterotetramer composed of four distinct subunits 160, 100, 70 and 30 kDa.

The protein localises to the nucleus. CPSF plays a key role in pre-mRNA 3'-end formation, recognizing the AAUAAA signal sequence and interacting with poly(A)polymerase and other factors to bring about cleavage and poly(A) addition. This Oryza sativa subsp. japonica (Rice) protein is Cleavage and polyadenylation specificity factor subunit 2.